Reading from the N-terminus, the 572-residue chain is 2-hydroxyacyl-CoA lyase (572 aa).

Ala-2 bears the N-acetylalanine mark. Glu-58 contacts thiamine diphosphate. Residues 407–488 (TMDVGRSVLV…IIVFNNGGVY (82 aa)) form a thiamine pyrophosphate binding region. Residues Asp-457 and Asn-484 each coordinate Mg(2+).

The protein belongs to the TPP enzyme family. In terms of assembly, homotetramer. Requires Mg(2+) as cofactor. Thiamine diphosphate is required as a cofactor.

It carries out the reaction an (R)-2-hydroxy-long-chain-fatty acyl-CoA = a long-chain fatty aldehyde + formyl-CoA. It catalyses the reaction a 2-hydroxy-3-methyl fatty acyl-CoA = a 2-methyl-branched fatty aldehyde + formyl-CoA. Functionally, catalyzes a carbon-carbon cleavage reaction; cleaves a 2-hydroxy-3-methylacyl-CoA into formyl-CoA and a 2-methyl-branched fatty aldehyde. This Arabidopsis thaliana (Mouse-ear cress) protein is 2-hydroxyacyl-CoA lyase (HACL).